The following is a 591-amino-acid chain: Glutathione hydrolase (591 aa).

The signal sequence occupies residues 1–41 (MASKWIEEQPLVHRRDIRISSKSRIAAGLLVLLVLWRYGLP). L-glutamate is bound at residue arginine 122. N-linked (GlcNAc...) asparagine glycans are attached at residues asparagine 135, asparagine 270, and asparagine 389. Threonine 393 (nucleophile) is an active-site residue. L-glutamate is bound by residues threonine 411, glutamate 432, and 464-465 (SA). An N-linked (GlcNAc...) asparagine glycan is attached at asparagine 534.

The protein belongs to the gamma-glutamyltransferase family.

The enzyme catalyses an N-terminal (5-L-glutamyl)-[peptide] + an alpha-amino acid = 5-L-glutamyl amino acid + an N-terminal L-alpha-aminoacyl-[peptide]. The catalysed reaction is glutathione + H2O = L-cysteinylglycine + L-glutamate. It carries out the reaction an S-substituted glutathione + H2O = an S-substituted L-cysteinylglycine + L-glutamate. It participates in mycotoxin biosynthesis. In terms of biological role, gamma-glutamyltransferase; part of the gene cluster that mediates the biosynthesis of the secondary metabolite ustiloxin B, an antimitotic tetrapeptide. First, ustA is processed by the subtilisin-like endoprotease Kex2 that is outside the ustiloxin B gene cluster, at the C-terminal side of Arg-Lys, after transfer to Golgi apparatus through the endoplasmic reticulum (ER). Cleavage by KEX2 generates 16 peptides YAIG-I to YAIG-XVI. To process the precursor peptide further, at least two peptidases are necessary to cleave the N-terminal and C-terminal sides of the Tyr-Ala-Ile-Gly core peptide which serves as backbone for the synthesis of ustiloxin B, through cyclization and modification of the tyrosine with a non-protein coding amino acid, norvaline. One of the two peptidases must be the serine peptidase ustP; and the other pepdidase is probably ustH. Macrocyclization of the core peptide derived from ustA requires the tyrosinase ustQ, as well as the homologous oxidases ustYa and ustYb, and leads to the production of the first cyclization product N-desmethylustiloxin F. For the formation of N-desmethylustiloxin F, three oxidation steps are required, hydroxylation at the benzylic position, hydroxylation at either the aromatic ring of Tyr or beta-position of Ile, and oxidative cyclization. UstQ may catalyze the oxidation of a phenol moiety, whereas the ustYa and ustYb are most likely responsible for the remaining two-step oxidations. N-desmethylustiloxin F is then methylated by ustM to yield ustiloxin F which in turn substrate of the cytochrome P450 monooxygenase ustC which catalyzes the formation of S-deoxyustiloxin H. The flavoprotein monooxygenases ustF1 and ustF2 then participate in the modification of the side chain of S-deoxyustiloxin H, leading to the synthesis of an oxime intermediate, via ustiloxin H. Finally, carboxylative dehydration performed by the cysteine desulfurase-like protein ustD yields ustiloxin B. The polypeptide is Glutathione hydrolase (Aspergillus flavus (strain ATCC 200026 / FGSC A1120 / IAM 13836 / NRRL 3357 / JCM 12722 / SRRC 167)).